The chain runs to 172 residues: Large ribosomal subunit protein uL10 (172 aa).

It belongs to the universal ribosomal protein uL10 family. As to quaternary structure, part of the ribosomal stalk of the 50S ribosomal subunit. The N-terminus interacts with L11 and the large rRNA to form the base of the stalk. The C-terminus forms an elongated spine to which L12 dimers bind in a sequential fashion forming a multimeric L10(L12)X complex.

Its function is as follows. Forms part of the ribosomal stalk, playing a central role in the interaction of the ribosome with GTP-bound translation factors. In Ruegeria sp. (strain TM1040) (Silicibacter sp.), this protein is Large ribosomal subunit protein uL10.